A 48-amino-acid chain; its full sequence is Large ribosomal subunit protein bL36c (48 aa).

Belongs to the bacterial ribosomal protein bL36 family.

It is found in the plastid. The protein localises to the chloroplast. The polypeptide is Large ribosomal subunit protein bL36c (rpl36) (Guillardia theta (Cryptophyte)).